A 180-amino-acid chain; its full sequence is Pro-glucagon (180 aa).

The N-terminal stretch at 1–20 (MKSLYFVAGLFVMLVQGSWQ) is a signal peptide. Residues 25–35 (NTEEKSSSFPA) show a composition bias toward polar residues. The interval 25–59 (NTEEKSSSFPAPQTDPLGDPDQINEDKRHSQGTFT) is disordered. At serine 54 the chain carries Phosphoserine. Residues 84 to 89 (NKNNIA) constitute a propeptide that is removed on maturation. Residues serine 105 and serine 108 each carry the phosphoserine modification. Arginine 127 is modified (arginine amide). A propeptide spanning residues 131–145 (DFPEEVNIVEELRRR) is cleaved from the precursor. 2 positions are modified to phosphoserine: serine 150 and serine 152.

It belongs to the glucagon family. Post-translationally, proglucagon is post-translationally processed in a tissue-specific manner in pancreatic A cells and intestinal L cells. In pancreatic A cells, the major bioactive hormone is glucagon cleaved by PCSK2/PC2. In the intestinal L cells PCSK1/PC1 liberates GLP-1, GLP-2, glicentin and oxyntomodulin. GLP-1 is further N-terminally truncated by post-translational processing in the intestinal L cells resulting in GLP-1(7-37) GLP-1-(7-36)amide. The C-terminal amidation is neither important for the metabolism of GLP-1 nor for its effects on the endocrine pancreas. Glucagon is secreted in the A cells of the islets of Langerhans. GLP-1, GLP-2, oxyntomodulin and glicentin are secreted from enteroendocrine cells throughout the gastrointestinal tract.

The protein resides in the secreted. Its function is as follows. Plays a key role in glucose metabolism and homeostasis. Regulates blood glucose by increasing gluconeogenesis and decreasing glycolysis. A counterregulatory hormone of insulin, raises plasma glucose levels in response to insulin-induced hypoglycemia. Plays an important role in initiating and maintaining hyperglycemic conditions in diabetes. In terms of biological role, potent stimulator of glucose-dependent insulin release. Also stimulates insulin release in response to IL6. Plays important roles on gastric motility and the suppression of plasma glucagon levels. May be involved in the suppression of satiety and stimulation of glucose disposal in peripheral tissues, independent of the actions of insulin. Has growth-promoting activities on intestinal epithelium. May also regulate the hypothalamic pituitary axis (HPA) via effects on LH, TSH, CRH, oxytocin, and vasopressin secretion. Increases islet mass through stimulation of islet neogenesis and pancreatic beta cell proliferation. Inhibits beta cell apoptosis. Functionally, stimulates intestinal growth and up-regulates villus height in the small intestine, concomitant with increased crypt cell proliferation and decreased enterocyte apoptosis. The gastrointestinal tract, from the stomach to the colon is the principal target for GLP-2 action. Plays a key role in nutrient homeostasis, enhancing nutrient assimilation through enhanced gastrointestinal function, as well as increasing nutrient disposal. Stimulates intestinal glucose transport and decreases mucosal permeability. Significantly reduces food intake. Inhibits gastric emptying in humans. Suppression of gastric emptying may lead to increased gastric distension, which may contribute to satiety by causing a sensation of fullness. Its function is as follows. May modulate gastric acid secretion and the gastro-pyloro-duodenal activity. May play an important role in intestinal mucosal growth in the early period of life. The polypeptide is Pro-glucagon (GCG) (Bos taurus (Bovine)).